The following is a 105-amino-acid chain: Large ribosomal subunit protein uL24 (105 aa).

Belongs to the universal ribosomal protein uL24 family. In terms of assembly, part of the 50S ribosomal subunit.

One of two assembly initiator proteins, it binds directly to the 5'-end of the 23S rRNA, where it nucleates assembly of the 50S subunit. Functionally, one of the proteins that surrounds the polypeptide exit tunnel on the outside of the subunit. The protein is Large ribosomal subunit protein uL24 of Azoarcus sp. (strain BH72).